The sequence spans 453 residues: Bifunctional protein GlmU (453 aa).

A pyrophosphorylase region spans residues Met1–Arg227. Residues Leu8–Gly11, Lys22, Gln73, Gly78–Thr79, Ser100–Asp102, Gly137, Glu152, Asn167, and Asn225 each bind UDP-N-acetyl-alpha-D-glucosamine. A Mg(2+)-binding site is contributed by Asp102. Asn225 contacts Mg(2+). Residues Gln228–Glu248 are linker. The interval Gly249 to Lys453 is N-acetyltransferase. Residues Arg331 and Lys349 each coordinate UDP-N-acetyl-alpha-D-glucosamine. Catalysis depends on His361, which acts as the Proton acceptor. The UDP-N-acetyl-alpha-D-glucosamine site is built by Tyr364 and Asn375. Acetyl-CoA-binding positions include Ala378, Asn384–Tyr385, Ser403, Ala421, and Arg438. Positions Pro430–Lys453 are disordered.

In the N-terminal section; belongs to the N-acetylglucosamine-1-phosphate uridyltransferase family. This sequence in the C-terminal section; belongs to the transferase hexapeptide repeat family. As to quaternary structure, homotrimer. It depends on Mg(2+) as a cofactor.

Its subcellular location is the cytoplasm. It carries out the reaction alpha-D-glucosamine 1-phosphate + acetyl-CoA = N-acetyl-alpha-D-glucosamine 1-phosphate + CoA + H(+). The enzyme catalyses N-acetyl-alpha-D-glucosamine 1-phosphate + UTP + H(+) = UDP-N-acetyl-alpha-D-glucosamine + diphosphate. It participates in nucleotide-sugar biosynthesis; UDP-N-acetyl-alpha-D-glucosamine biosynthesis; N-acetyl-alpha-D-glucosamine 1-phosphate from alpha-D-glucosamine 6-phosphate (route II): step 2/2. Its pathway is nucleotide-sugar biosynthesis; UDP-N-acetyl-alpha-D-glucosamine biosynthesis; UDP-N-acetyl-alpha-D-glucosamine from N-acetyl-alpha-D-glucosamine 1-phosphate: step 1/1. It functions in the pathway bacterial outer membrane biogenesis; LPS lipid A biosynthesis. Its function is as follows. Catalyzes the last two sequential reactions in the de novo biosynthetic pathway for UDP-N-acetylglucosamine (UDP-GlcNAc). The C-terminal domain catalyzes the transfer of acetyl group from acetyl coenzyme A to glucosamine-1-phosphate (GlcN-1-P) to produce N-acetylglucosamine-1-phosphate (GlcNAc-1-P), which is converted into UDP-GlcNAc by the transfer of uridine 5-monophosphate (from uridine 5-triphosphate), a reaction catalyzed by the N-terminal domain. This chain is Bifunctional protein GlmU, found in Nitrosococcus oceani (strain ATCC 19707 / BCRC 17464 / JCM 30415 / NCIMB 11848 / C-107).